A 159-amino-acid polypeptide reads, in one-letter code: Ribosomal RNA large subunit methyltransferase H (159 aa).

S-adenosyl-L-methionine is bound by residues Leu-76, Gly-108, and 127–132; that span reads FGRLTL.

Belongs to the RNA methyltransferase RlmH family. In terms of assembly, homodimer.

Its subcellular location is the cytoplasm. It carries out the reaction pseudouridine(1915) in 23S rRNA + S-adenosyl-L-methionine = N(3)-methylpseudouridine(1915) in 23S rRNA + S-adenosyl-L-homocysteine + H(+). Specifically methylates the pseudouridine at position 1915 (m3Psi1915) in 23S rRNA. The protein is Ribosomal RNA large subunit methyltransferase H of Listeria monocytogenes serotype 4b (strain CLIP80459).